The chain runs to 2506 residues: Zinc finger protein 462 (2506 aa).

C2H2-type zinc fingers lie at residues 4–27 (LQCD…QDVH), 108–131 (FQCK…RKVH), and 162–185 (FSCQ…KMYH). A Glycyl lysine isopeptide (Lys-Gly) (interchain with G-Cter in SUMO1); alternate cross-link involves residue lysine 20. Lysine 20 participates in a covalent cross-link: Glycyl lysine isopeptide (Lys-Gly) (interchain with G-Cter in SUMO2); alternate. Positions 215-241 (PCKELPAEVVERSILESMVKPLTKSRG) are interaction with PBX1. Glycyl lysine isopeptide (Lys-Gly) (interchain with G-Cter in SUMO2) cross-links involve residues lysine 234 and lysine 271. Residues 280-299 (QEGTNLPDVPNKSAPSPTSN) are disordered. 2 O-linked (GlcNAc6P) serine glycosylation sites follow: serine 292 and serine 309. Glycyl lysine isopeptide (Lys-Gly) (interchain with G-Cter in SUMO2) cross-links involve residues lysine 337, lysine 347, and lysine 349. Residues 337–356 (KFSPMSYPQMKPKSPHNSGL) form a disordered region. 2 positions are modified to phosphoserine: serine 350 and serine 354. Residue lysine 428 forms a Glycyl lysine isopeptide (Lys-Gly) (interchain with G-Cter in SUMO2) linkage. 2 C2H2-type zinc fingers span residues 439-462 (FQCP…ENIH) and 470-492 (YKCD…KQCH). A Glycyl lysine isopeptide (Lys-Gly) (interchain with G-Cter in SUMO2) cross-link involves residue lysine 484. Residues 535–596 (DPLQQQQPPQ…QPQPPTQAAP (62 aa)) form a disordered region. The segment covering 542-593 (PPQPPPPPPPPPPSQPQPLQQPQPPQLQPPHQVPPQPQTQPPPTQQPQPPTQ) has biased composition (pro residues). The C2H2-type 6 zinc-finger motif lies at 600-623 (YKCTMCNYSTTTLKGLRVHQQHKH). Glycyl lysine isopeptide (Lys-Gly) (interchain with G-Cter in SUMO2) cross-links involve residues lysine 631, lysine 657, and lysine 668. Residues 636-661 (PSSLPLENETDSHPSSSNTVKKSQTS) are disordered. The segment covering 648–661 (HPSSSNTVKKSQTS) has biased composition (polar residues). Serine 688 bears the Phosphoserine mark. Residues lysine 706 and aspartate 849 each participate in a glycyl lysine isopeptide (Lys-Gly) (interchain with G-Cter in SUMO2) cross-link. C2H2-type zinc fingers lie at residues 843–866 (YYCK…QRMH), 886–908 (YRCL…YGEH), and 925–948 (YRCR…QRMH). Lysine 986 participates in a covalent cross-link: Glycyl lysine isopeptide (Lys-Gly) (interchain with G-Cter in SUMO2). The C2H2-type 10 zinc-finger motif lies at 1030–1053 (YDCDVCSFASPNMHSVLVHYQKKH). At serine 1090 the chain carries Phosphoserine. Lysine 1135 participates in a covalent cross-link: Glycyl lysine isopeptide (Lys-Gly) (interchain with G-Cter in SUMO2). Residues 1157-1186 (MRGVEGPQGSPRPPAPIQQLNRSSSERDGP) are disordered. Residue serine 1166 is modified to Phosphoserine. Residues lysine 1206, lysine 1214, lysine 1220, and lysine 1243 each participate in a glycyl lysine isopeptide (Lys-Gly) (interchain with G-Cter in SUMO2) cross-link. C2H2-type zinc fingers lie at residues 1265–1288 (LKCR…KKDH) and 1470–1493 (YQCT…GKKH). A Glycyl lysine isopeptide (Lys-Gly) (interchain with G-Cter in SUMO2) cross-link involves residue lysine 1499. A C2H2-type 13 zinc finger spans residues 1515-1538 (YKCRHCPYINTRIHGVLTHYQKRH). Residues lysine 1571 and lysine 1591 each participate in a glycyl lysine isopeptide (Lys-Gly) (interchain with G-Cter in SUMO2) cross-link. 3 C2H2-type zinc fingers span residues 1577-1600 (YRCK…EKYH), 1660-1683 (FRCQ…RIKH), and 1697-1720 (FKCA…QKRH). Glycyl lysine isopeptide (Lys-Gly) (interchain with G-Cter in SUMO2) cross-links involve residues lysine 1698 and lysine 1780. The segment at 1892-1914 (YQCKHCDSKLQSTAELTSHLNIH) adopts a C2H2-type 17 zinc-finger fold. Lysine 1946 participates in a covalent cross-link: Glycyl lysine isopeptide (Lys-Gly) (interchain with G-Cter in SUMO2). The C2H2-type 18; degenerate zinc-finger motif lies at 1968–1992 (YKCKFCVEVHPTLRAICNHLRKHVQ). The residue at position 2004 (lysine 2004) is an N6-methyllysine. 3 consecutive C2H2-type zinc fingers follow at residues 2025–2048 (YSCQ…QTHH), 2054–2077 (FRCK…LKAH), and 2083–2106 (YKCS…LKVH). Lysine 2104 participates in a covalent cross-link: Glycyl lysine isopeptide (Lys-Gly) (interchain with G-Cter in SUMO2). A disordered region spans residues 2122–2152 (SSHSHHSSQKATPAEEVEDSNDSSYSEPPDV). Over residues 2143–2152 (DSSYSEPPDV) the composition is skewed to polar residues. A phosphoserine mark is found at serine 2172 and serine 2177. 3 consecutive C2H2-type zinc fingers follow at residues 2191–2214 (LHCE…RDKH), 2220–2243 (FKCK…EAGH), and 2254–2276 (LRCP…IVLH). A Glycyl lysine isopeptide (Lys-Gly) (interchain with G-Cter in SUMO2) cross-link involves residue lysine 2293. C2H2-type zinc fingers lie at residues 2300–2322 (FRCD…IEKH) and 2328–2351 (YKCQ…RDEH). Residues 2371 to 2396 (MKEKMESSSSDDEDKEEEMNSKAEDR) are disordered. The C2H2-type 27 zinc-finger motif lies at 2414-2436 (FPCEFCGRAFSQGSEWERHVLRH). Glycyl lysine isopeptide (Lys-Gly) (interchain with G-Cter in SUMO2) cross-links involve residues lysine 2444 and lysine 2504.

As to quaternary structure, interacts with PBX1; this interaction prevents PBX1-HOXA9 heterodimer from forming and binding to DNA. Post-translationally, O-GlcNAcylated with O-GlcNAc-6-phosphate.

It is found in the nucleus. Functionally, zinc finger nuclear factor involved in transcription by regulating chromatin structure and organization. Involved in the pluripotency and differentiation of embryonic stem cells by regulating SOX2, POU5F1/OCT4, and NANOG. By binding PBX1, prevents the heterodimerization of PBX1 and HOXA9 and their binding to DNA. Regulates neuronal development and neural cell differentiation. This chain is Zinc finger protein 462, found in Homo sapiens (Human).